Consider the following 134-residue polypeptide: Small ribosomal subunit protein uS8c (134 aa).

As to quaternary structure, component of the chloroplast small ribosomal subunit (SSU). Mature 70S chloroplast ribosomes of higher plants consist of a small (30S) and a large (50S) subunit. The 30S small subunit contains 1 molecule of ribosomal RNA (16S rRNA) and 24 different proteins. The 50S large subunit contains 3 rRNA molecules (23S, 5S and 4.5S rRNA) and 33 different proteins.

The protein resides in the plastid. Its subcellular location is the chloroplast. Its function is as follows. Component of the chloroplast ribosome (chloro-ribosome), a dedicated translation machinery responsible for the synthesis of chloroplast genome-encoded proteins, including proteins of the transcription and translation machinery and components of the photosynthetic apparatus. The polypeptide is Small ribosomal subunit protein uS8c (rps8) (Spinacia oleracea (Spinach)).